We begin with the raw amino-acid sequence, 274 residues long: Dermonecrotic toxin LspiSicTox-betaIII2 (274 aa).

Residue histidine 5 is part of the active site. Residues glutamate 25 and aspartate 27 each contribute to the Mg(2+) site. Catalysis depends on histidine 41, which acts as the Nucleophile. 2 disulfides stabilise this stretch: cysteine 45-cysteine 51 and cysteine 47-cysteine 189. Aspartate 85 is a Mg(2+) binding site.

This sequence belongs to the arthropod phospholipase D family. Class II subfamily. Mg(2+) is required as a cofactor. Expressed by the venom gland.

It is found in the secreted. It carries out the reaction an N-(acyl)-sphingosylphosphocholine = an N-(acyl)-sphingosyl-1,3-cyclic phosphate + choline. The enzyme catalyses an N-(acyl)-sphingosylphosphoethanolamine = an N-(acyl)-sphingosyl-1,3-cyclic phosphate + ethanolamine. It catalyses the reaction a 1-acyl-sn-glycero-3-phosphocholine = a 1-acyl-sn-glycero-2,3-cyclic phosphate + choline. The catalysed reaction is a 1-acyl-sn-glycero-3-phosphoethanolamine = a 1-acyl-sn-glycero-2,3-cyclic phosphate + ethanolamine. Functionally, dermonecrotic toxins cleave the phosphodiester linkage between the phosphate and headgroup of certain phospholipids (sphingolipid and lysolipid substrates), forming an alcohol (often choline) and a cyclic phosphate. This toxin acts on sphingomyelin (SM). It may also act on ceramide phosphoethanolamine (CPE), lysophosphatidylcholine (LPC) and lysophosphatidylethanolamine (LPE), but not on lysophosphatidylserine (LPS), and lysophosphatidylglycerol (LPG). It acts by transphosphatidylation, releasing exclusively cyclic phosphate products as second products. Induces dermonecrosis, hemolysis, increased vascular permeability, edema, inflammatory response, and platelet aggregation. The polypeptide is Dermonecrotic toxin LspiSicTox-betaIII2 (Loxosceles spinulosa (Recluse spider)).